Reading from the N-terminus, the 267-residue chain is MNKTRYRLDVAYDGANFCGWAPQPGLRTVGGLILDALRLICSEPPDIVVAARTDAGVHALQQVCHVDLISSPDPVWLLHRLRSLLKSETDLHILSAVKAPVNFHARFSAIGRRYVYRVIDKRSSWYPQNRYFVYRVNAFLQDYRMRRAASGLIGLKDFGAFCKPRRMGSTVRHLRQFEVIRQPDGQIHFFLESDAFCHSMVRNLVGSLIEVGRGALTLQDLFCYTKIAKRTPKIPTLPPHALTLIGIDYPQEHLFECQNRKTRQKRT.

The active-site Nucleophile is Asp-54. Residue Tyr-114 participates in substrate binding.

This sequence belongs to the tRNA pseudouridine synthase TruA family. In terms of assembly, homodimer.

The enzyme catalyses uridine(38/39/40) in tRNA = pseudouridine(38/39/40) in tRNA. Its function is as follows. Formation of pseudouridine at positions 38, 39 and 40 in the anticodon stem and loop of transfer RNAs. In Tropheryma whipplei (strain Twist) (Whipple's bacillus), this protein is tRNA pseudouridine synthase A.